Here is a 445-residue protein sequence, read N- to C-terminus: Glucose-6-phosphate isomerase (445 aa).

Glu-284 acts as the Proton donor in catalysis. Active-site residues include His-305 and Lys-419.

This sequence belongs to the GPI family.

It localises to the cytoplasm. It catalyses the reaction alpha-D-glucose 6-phosphate = beta-D-fructose 6-phosphate. Its pathway is carbohydrate biosynthesis; gluconeogenesis. The protein operates within carbohydrate degradation; glycolysis; D-glyceraldehyde 3-phosphate and glycerone phosphate from D-glucose: step 2/4. Catalyzes the reversible isomerization of glucose-6-phosphate to fructose-6-phosphate. The protein is Glucose-6-phosphate isomerase of Leptospira borgpetersenii serovar Hardjo-bovis (strain JB197).